Consider the following 155-residue polypeptide: Small ribosomal subunit protein uS7 (155 aa).

The protein belongs to the universal ribosomal protein uS7 family. As to quaternary structure, part of the 30S ribosomal subunit. Contacts proteins S9 and S11.

In terms of biological role, one of the primary rRNA binding proteins, it binds directly to 16S rRNA where it nucleates assembly of the head domain of the 30S subunit. Is located at the subunit interface close to the decoding center, probably blocks exit of the E-site tRNA. This is Small ribosomal subunit protein uS7 from Pseudothermotoga lettingae (strain ATCC BAA-301 / DSM 14385 / NBRC 107922 / TMO) (Thermotoga lettingae).